A 392-amino-acid polypeptide reads, in one-letter code: Tryptophan synthase beta chain (392 aa).

Lys-84 bears the N6-(pyridoxal phosphate)lysine mark.

This sequence belongs to the TrpB family. In terms of assembly, tetramer of two alpha and two beta chains. Pyridoxal 5'-phosphate serves as cofactor.

The catalysed reaction is (1S,2R)-1-C-(indol-3-yl)glycerol 3-phosphate + L-serine = D-glyceraldehyde 3-phosphate + L-tryptophan + H2O. Its pathway is amino-acid biosynthesis; L-tryptophan biosynthesis; L-tryptophan from chorismate: step 5/5. Its function is as follows. The beta subunit is responsible for the synthesis of L-tryptophan from indole and L-serine. The chain is Tryptophan synthase beta chain from Campylobacter jejuni subsp. jejuni serotype O:6 (strain 81116 / NCTC 11828).